The sequence spans 134 residues: MAISLKVLAPNQNVYEGDAEEVILPSTTGQIGVLPGHISLVTAIDIGVLRLRMNSKWTSIALMGGFAEIESDEVIVLVNSAEIGSEINTQNAEEALKKAKSAISKFPENEKSPEKIKALNEISKAEARFQASKN.

The protein belongs to the ATPase epsilon chain family. As to quaternary structure, F-type ATPases have 2 components, CF(1) - the catalytic core - and CF(0) - the membrane proton channel. CF(1) has five subunits: alpha(3), beta(3), gamma(1), delta(1), epsilon(1). CF(0) has three main subunits: a, b and c.

The protein localises to the cellular thylakoid membrane. In terms of biological role, produces ATP from ADP in the presence of a proton gradient across the membrane. This chain is ATP synthase epsilon chain, found in Prochlorococcus marinus (strain MIT 9515).